Consider the following 197-residue polypeptide: Molybdenum cofactor guanylyltransferase (197 aa).

Residues 12-14 (LAG), lysine 25, asparagine 53, aspartate 71, and aspartate 101 each bind GTP. Position 101 (aspartate 101) interacts with Mg(2+).

It belongs to the MobA family. As to quaternary structure, monomer. The cofactor is Mg(2+).

Its subcellular location is the cytoplasm. The catalysed reaction is Mo-molybdopterin + GTP + H(+) = Mo-molybdopterin guanine dinucleotide + diphosphate. Its function is as follows. Transfers a GMP moiety from GTP to Mo-molybdopterin (Mo-MPT) cofactor (Moco or molybdenum cofactor) to form Mo-molybdopterin guanine dinucleotide (Mo-MGD) cofactor. In Bordetella pertussis (strain Tohama I / ATCC BAA-589 / NCTC 13251), this protein is Molybdenum cofactor guanylyltransferase.